The following is a 492-amino-acid chain: N-succinylglutamate 5-semialdehyde dehydrogenase (492 aa).

220–225 (GSASTG) is an NAD(+) binding site. Residues Glu243 and Cys277 contribute to the active site.

This sequence belongs to the aldehyde dehydrogenase family. AstD subfamily.

The enzyme catalyses N-succinyl-L-glutamate 5-semialdehyde + NAD(+) + H2O = N-succinyl-L-glutamate + NADH + 2 H(+). It participates in amino-acid degradation; L-arginine degradation via AST pathway; L-glutamate and succinate from L-arginine: step 4/5. In terms of biological role, catalyzes the NAD-dependent reduction of succinylglutamate semialdehyde into succinylglutamate. In Salmonella paratyphi A (strain AKU_12601), this protein is N-succinylglutamate 5-semialdehyde dehydrogenase.